We begin with the raw amino-acid sequence, 450 residues long: Glucose-6-phosphate isomerase (450 aa).

T38 bears the Phosphothreonine mark. The active-site Proton donor is the E290. Active-site residues include H311 and K425.

This sequence belongs to the GPI family.

It is found in the cytoplasm. The catalysed reaction is alpha-D-glucose 6-phosphate = beta-D-fructose 6-phosphate. Its pathway is carbohydrate biosynthesis; gluconeogenesis. The protein operates within carbohydrate degradation; glycolysis; D-glyceraldehyde 3-phosphate and glycerone phosphate from D-glucose: step 2/4. Catalyzes the reversible isomerization of glucose-6-phosphate to fructose-6-phosphate. The sequence is that of Glucose-6-phosphate isomerase from Bacillus licheniformis (strain ATCC 14580 / DSM 13 / JCM 2505 / CCUG 7422 / NBRC 12200 / NCIMB 9375 / NCTC 10341 / NRRL NRS-1264 / Gibson 46).